Here is a 244-residue protein sequence, read N- to C-terminus: Phosphoadenosine 5'-phosphosulfate reductase (244 aa).

Catalysis depends on Cys-239, which acts as the Nucleophile; cysteine thiosulfonate intermediate.

It belongs to the PAPS reductase family. CysH subfamily.

The protein resides in the cytoplasm. The catalysed reaction is [thioredoxin]-disulfide + sulfite + adenosine 3',5'-bisphosphate + 2 H(+) = [thioredoxin]-dithiol + 3'-phosphoadenylyl sulfate. Its pathway is sulfur metabolism; hydrogen sulfide biosynthesis; sulfite from sulfate: step 3/3. Its function is as follows. Catalyzes the formation of sulfite from phosphoadenosine 5'-phosphosulfate (PAPS) using thioredoxin as an electron donor. This chain is Phosphoadenosine 5'-phosphosulfate reductase, found in Salmonella agona (strain SL483).